The primary structure comprises 405 residues: Accessory Sec system protein translocase subunit SecY2 (405 aa).

The next 10 membrane-spanning stretches (helical) occupy residues 14 to 34 (LFTSFLLFIYVLGSRIILPFV), 65 to 85 (IFSVGLSPWMSAMILWQMFSF), 104 to 124 (MYLTLLIAVIQSLAVSLRLPV), 131 to 151 (ILVVLMNTILLIAGTFFLVWL), 156 to 176 (ASMGIGGSIVILLSSMVLNIP), 191 to 211 (GIIVLLALLTLVFSYLLALMY), 247 to 267 (MYVMSFLSVPAYLFILLGFIF), 285 to 305 (PLWVYVYISVLFLFSIIFAFV), 343 to 363 (FSVIGGLFNVIMAGGPMLFVL), and 368 to 388 (LLRLAMIPGLFMMFGGMIFTI).

The protein belongs to the SecY/SEC61-alpha family. SecY2 subfamily. As to quaternary structure, component of the accessory SecA2/SecY2 protein translocase complex required to export cell wall proteins. May form heterotrimers with SecE and SecG subunits.

It localises to the cell membrane. In terms of biological role, part of the accessory SecA2/SecY2 system specifically required for export of possible cell wall proteins. The central subunit of a protein translocation channel. This Streptococcus pneumoniae serotype 4 (strain ATCC BAA-334 / TIGR4) protein is Accessory Sec system protein translocase subunit SecY2.